The following is a 235-amino-acid chain: Probable deoxycytidine kinase FPV151 (235 aa).

30-38 (GNISAGKST) is a binding site for ATP. Substrate contacts are provided by Glu53, Tyr68, and Gln79. Glu104 serves as the catalytic Proton acceptor. Substrate-binding residues include Arg105, Asp110, and Glu172.

It belongs to the DCK/DGK family.

It carries out the reaction 2'-deoxycytidine + a ribonucleoside 5'-triphosphate = dCMP + a ribonucleoside 5'-diphosphate + H(+). In Vertebrata (FPV), this protein is Probable deoxycytidine kinase FPV151.